The following is a 449-amino-acid chain: MDAKMFDTICSRDAISWLPDEVLGKILSLIPTKQAVSTSLLAKKWRTIFRLVDHLELDDSFSLQAVKDQTPGLRKHVRFVFTEDFKIFVDRTLALQCDYPIKNFSLKCHVSKYDERQKACVGRWISNVVGRGVFELDLRMKDPGIHFLPPHLVASKTLVKLTLGTQLCLGQLPSYVSLPSLKSLFIDTIVFYDIEDLCCVLLAGCPVLEELSVHHHDFIATPHTISSPTLKRLSVDYHCPDDVDSASHMSFDLPKLVYLEYSHCALGEYWQINLESLVEAKLDLGLERKVLRMDVTDLIIGIRNVQSLHLSPDSVHVIYSYCRHGLPVFKNLVNLSFGSKNKRGWRLLANLLKQSTKLETLIVKDLNGYTGDVSMPLNKVTSLHILGYRGTADEVKQLKSFIGEFECLELVQVDVAEAAEDNGKILQSKRDLMMLLGVSLPSKCQFKVT.

The F-box domain occupies 12–64; the sequence is RDAISWLPDEVLGKILSLIPTKQAVSTSLLAKKWRTIFRLVDHLELDDSFSLQ. 6 LRR repeats span residues 161-188, 191-215, 216-237, 239-263, 287-312, and 340-365; these read LTLGTQLCLGQLPSYVSLPSLKSLFIDT, FYDIEDLCCVLLAGCPVLEELSVHH, HDFIATPHTISSPTLKRLSVDY, CPDDVDSASHMSFDLPKLVYLEYSH, ERKVLRMDVTDLIIGIRNVQSLHLSP, and KNKRGWRLLANLLKQSTKLETLIVKD.

The protein is F-box/LRR-repeat protein At3g60040 of Arabidopsis thaliana (Mouse-ear cress).